We begin with the raw amino-acid sequence, 504 residues long: Deoxyguanosinetriphosphate triphosphohydrolase (504 aa).

One can recognise an HD domain in the interval 66-273 (RLTHSLEVQQ…MEAADDISYC (208 aa)).

The protein belongs to the dGTPase family. Type 1 subfamily. As to quaternary structure, homotetramer. The cofactor is Mg(2+).

It catalyses the reaction dGTP + H2O = 2'-deoxyguanosine + triphosphate + H(+). Functionally, dGTPase preferentially hydrolyzes dGTP over the other canonical NTPs. This Cronobacter sakazakii (strain ATCC BAA-894) (Enterobacter sakazakii) protein is Deoxyguanosinetriphosphate triphosphohydrolase.